We begin with the raw amino-acid sequence, 204 residues long: Leucyl/phenylalanyl-tRNA--protein transferase (204 aa).

It belongs to the L/F-transferase family.

The protein localises to the cytoplasm. The catalysed reaction is N-terminal L-lysyl-[protein] + L-leucyl-tRNA(Leu) = N-terminal L-leucyl-L-lysyl-[protein] + tRNA(Leu) + H(+). The enzyme catalyses N-terminal L-arginyl-[protein] + L-leucyl-tRNA(Leu) = N-terminal L-leucyl-L-arginyl-[protein] + tRNA(Leu) + H(+). It carries out the reaction L-phenylalanyl-tRNA(Phe) + an N-terminal L-alpha-aminoacyl-[protein] = an N-terminal L-phenylalanyl-L-alpha-aminoacyl-[protein] + tRNA(Phe). Functions in the N-end rule pathway of protein degradation where it conjugates Leu, Phe and, less efficiently, Met from aminoacyl-tRNAs to the N-termini of proteins containing an N-terminal arginine or lysine. The sequence is that of Leucyl/phenylalanyl-tRNA--protein transferase from Rhizobium etli (strain CIAT 652).